We begin with the raw amino-acid sequence, 619 residues long: 1-deoxy-D-xylulose-5-phosphate synthase (619 aa).

Thiamine diphosphate contacts are provided by residues histidine 80 and 121–123 (GHS). Aspartate 152 contacts Mg(2+). Thiamine diphosphate is bound by residues 153–154 (GA), asparagine 181, tyrosine 288, and glutamate 370. Residue asparagine 181 coordinates Mg(2+).

It belongs to the transketolase family. DXPS subfamily. Homodimer. Mg(2+) is required as a cofactor. It depends on thiamine diphosphate as a cofactor.

It carries out the reaction D-glyceraldehyde 3-phosphate + pyruvate + H(+) = 1-deoxy-D-xylulose 5-phosphate + CO2. It participates in metabolic intermediate biosynthesis; 1-deoxy-D-xylulose 5-phosphate biosynthesis; 1-deoxy-D-xylulose 5-phosphate from D-glyceraldehyde 3-phosphate and pyruvate: step 1/1. In terms of biological role, catalyzes the acyloin condensation reaction between C atoms 2 and 3 of pyruvate and glyceraldehyde 3-phosphate to yield 1-deoxy-D-xylulose-5-phosphate (DXP). This chain is 1-deoxy-D-xylulose-5-phosphate synthase, found in Yersinia pseudotuberculosis serotype I (strain IP32953).